The following is a 773-amino-acid chain: MNLFLSRFTGLRNTSFLGHARPFMFPRRYAHSLVAHNIGHIKLDPNEGLFFVDNLVNTPTYFYIQRYTALLFQNNLKKQLSAAFPSSDTMQLEDIIFRWQDGGAFLKVRYKEFPQDTEAVSEHVRESFRKRPVRTILHPFSTPIPHMVHGIPWLQDLYIFPSRTVDVNFEGPPLSQERLYSIFRTYGKLRSVTINSPTSATLSFSSLRSATSALNCMHGFVYGKTEFHMRYRHMNRFVAFKDWLFSHPRFTIPLVAAAITVLTASLFDPIRKFFVETNIVHGQKLRNINVVGWVKKKTRDIVLSPFHENGTNIKAPIWTTREKDCEQLKEWLDEALHSFIVVQGPRGSGKRDLVDRVVKERKNVLFFDCDRLFSTTNTEMFVSTLASQTGYFPLFSFLNNISSLIDMAAQGLIGQKTGIVSSSEGQVRQILNTTQTVLRSLALREHKEADTSVLDESEFLEVHADRLPVVILDNFQLRKLSNPMQRVVAEWAGNLVKEGIAHVLMLTPDVGGTKSLEQYVNGWENRTLLLGDADPVLAQRYVIESLPEEMQTEELRKELRVQLPKIGGRLRDLDYVARRLRVNSSSVSEAIGGIVSQNASDILQTFLRPASLTSEEKPTFTPEESWTLITYLSQHEYIPYHMLMLDPLFKGHDDAVRALEESELITITTVNARPDKVYAGKPVYVTAFRQLVNDPVLSANMQLVRCNALIGMANNAIKNDEQELQMLKDLGNLESGVKDRAHYLTTRIQKNQGVITDNEKSIERLTEALKKID.

Residues 1-29 (MNLFLSRFTGLRNTSFLGHARPFMFPRRY) constitute a mitochondrion transit peptide. The Mitochondrial matrix portion of the chain corresponds to 30–249 (AHSLVAHNIG…FKDWLFSHPR (220 aa)). Residues 163–234 (RTVDVNFEGP…TEFHMRYRHM (72 aa)) form the RRM domain. The helical transmembrane segment at 250–270 (FTIPLVAAAITVLTASLFDPI) threads the bilayer. Residues 271–773 (RKFFVETNIV…RLTEALKKID (503 aa)) are Mitochondrial intermembrane-facing.

This sequence belongs to the YME2 family.

The protein resides in the mitochondrion inner membrane. In terms of biological role, plays a role in maintaining the mitochondrial genome and in controlling the mtDNA escape. Involved in the regulation of mtDNA nucleotide structure and number. May have a dispensable role in early maturation of pre-rRNA. This is Mitochondrial escape protein 2 (yme2) from Schizosaccharomyces pombe (strain 972 / ATCC 24843) (Fission yeast).